A 147-amino-acid chain; its full sequence is Flagellar assembly factor FliW (147 aa).

It belongs to the FliW family. In terms of assembly, interacts with translational regulator CsrA and flagellin(s).

The protein localises to the cytoplasm. Acts as an anti-CsrA protein, binds CsrA and prevents it from repressing translation of its target genes, one of which is flagellin. Binds to flagellin and participates in the assembly of the flagellum. This chain is Flagellar assembly factor FliW, found in Oceanobacillus iheyensis (strain DSM 14371 / CIP 107618 / JCM 11309 / KCTC 3954 / HTE831).